Here is a 212-residue protein sequence, read N- to C-terminus: Dephospho-CoA kinase (212 aa).

One can recognise a DPCK domain in the interval 6–211 (RLGLTGGIGS…LSCQPLSPNQ (206 aa)). Residue 14 to 19 (GSGKST) participates in ATP binding.

It belongs to the CoaE family.

It is found in the cytoplasm. It carries out the reaction 3'-dephospho-CoA + ATP = ADP + CoA + H(+). It participates in cofactor biosynthesis; coenzyme A biosynthesis; CoA from (R)-pantothenate: step 5/5. Catalyzes the phosphorylation of the 3'-hydroxyl group of dephosphocoenzyme A to form coenzyme A. The chain is Dephospho-CoA kinase from Albidiferax ferrireducens (strain ATCC BAA-621 / DSM 15236 / T118) (Rhodoferax ferrireducens).